A 277-amino-acid polypeptide reads, in one-letter code: E3 ubiquitin-protein ligase CCNB1IP1 (277 aa).

The segment at 4–51 adopts an RING-type; atypical zinc-finger fold; that stretch reads CEDMLLCNYRKCRIKLSGYAWVTACSHIFCDQHGSGEFSRSPAICPAC. A coiled-coil region spans residues 127-182; that stretch reads QQIQSKDVELTSMKGEVTSMKKVLEEYKKKFSDISEKLMERNRQYQKLQGLYDSLR.

Interacts with CCNB1, UBE2L3 and NF2. Ubiquitinated; autoubiquitinated. In terms of processing, phosphorylated by CDK1 on serine or threonine residues (in vitro). In terms of tissue distribution, highly expressed in heart. Detected at intermediate levels in liver and kidney, and at low levels in placenta, brain and lung.

It is found in the nucleus. The protein resides in the chromosome. It carries out the reaction S-ubiquitinyl-[E2 ubiquitin-conjugating enzyme]-L-cysteine + [acceptor protein]-L-lysine = [E2 ubiquitin-conjugating enzyme]-L-cysteine + N(6)-ubiquitinyl-[acceptor protein]-L-lysine.. The protein operates within protein modification; protein ubiquitination. Ubiquitin E3 ligase that acts as a limiting factor for crossing-over during meiosis: required during zygonema to limit the colocalization of RNF212 with MutS-gamma-associated recombination sites and thereby establish early differentiation of crossover and non-crossover sites. Later, it is directed by MutL-gamma to stably accumulate at designated crossover sites. Probably promotes the dissociation of RNF212 and MutS-gamma to allow the progression of recombination and the implementation of the final steps of crossing over. Modulates cyclin-B levels and participates in the regulation of cell cycle progression through the G2 phase. Overexpression causes delayed entry into mitosis. The chain is E3 ubiquitin-protein ligase CCNB1IP1 (CCNB1IP1) from Homo sapiens (Human).